Here is a 383-residue protein sequence, read N- to C-terminus: 1-deoxy-D-xylulose 5-phosphate reductoisomerase (383 aa).

NADPH contacts are provided by threonine 10, glycine 11, serine 12, isoleucine 13, glycine 36, lysine 37, asparagine 38, and asparagine 122. A 1-deoxy-D-xylulose 5-phosphate-binding site is contributed by lysine 123. An NADPH-binding site is contributed by glutamate 124. Aspartate 148 contacts Mn(2+). Residues serine 149, glutamate 150, serine 174, and histidine 197 each contribute to the 1-deoxy-D-xylulose 5-phosphate site. Glutamate 150 is a Mn(2+) binding site. Glycine 203 serves as a coordination point for NADPH. Serine 210, asparagine 215, lysine 216, and glutamate 219 together coordinate 1-deoxy-D-xylulose 5-phosphate. Position 219 (glutamate 219) interacts with Mn(2+).

This sequence belongs to the DXR family. Requires Mg(2+) as cofactor. Mn(2+) is required as a cofactor.

The catalysed reaction is 2-C-methyl-D-erythritol 4-phosphate + NADP(+) = 1-deoxy-D-xylulose 5-phosphate + NADPH + H(+). The protein operates within isoprenoid biosynthesis; isopentenyl diphosphate biosynthesis via DXP pathway; isopentenyl diphosphate from 1-deoxy-D-xylulose 5-phosphate: step 1/6. Functionally, catalyzes the NADPH-dependent rearrangement and reduction of 1-deoxy-D-xylulose-5-phosphate (DXP) to 2-C-methyl-D-erythritol 4-phosphate (MEP). The polypeptide is 1-deoxy-D-xylulose 5-phosphate reductoisomerase (Bacillus velezensis (strain DSM 23117 / BGSC 10A6 / LMG 26770 / FZB42) (Bacillus amyloliquefaciens subsp. plantarum)).